The sequence spans 722 residues: Pre-B-cell leukemia transcription factor-interacting protein 1 (722 aa).

The span at 1-10 (MASCPDSDNS) shows a compositional bias: polar residues. The tract at residues 1 to 180 (MASCPDSDNS…TAAVDGEDQA (180 aa)) is disordered. The segment covering 88-97 (DDGHGTKRPG) has biased composition (basic and acidic residues). Phosphoserine is present on residues serine 133, serine 144, serine 145, and serine 146. Residue threonine 150 is modified to Phosphothreonine. The residue at position 166 (serine 166) is a Phosphoserine. Coiled-coil stretches lie at residues 266–346 (LLLD…RGVD) and 373–401 (DTSL…WQLL). A compositionally biased stretch (polar residues) spans 442–453 (QGINTGRSSNDS). Disordered regions lie at residues 442–562 (QGIN…SPDS) and 691–722 (RRSK…YHQG). Basic and acidic residues-rich tracts occupy residues 465 to 536 (HPRE…DPKV) and 546 to 559 (SGER…KDNS). Positions 482–502 (QKAEHWKLKKEESGQDRKKSW) match the Nuclear localization signal motif. Serine 559 carries the post-translational modification Phosphoserine. A Nuclear localization signal motif is present at residues 686-711 (DKALKRRSKKKEKQPWNHRAVGPREE).

Interacts with ESR1, PBX1, PBX2 and PBX3. Interacts with TEX11.

Its subcellular location is the cytoplasm. It is found in the cytoskeleton. It localises to the nucleus. In terms of biological role, regulator of pre-B-cell leukemia transcription factors (BPXs) function. Inhibits the binding of PBX1-HOX complex to DNA and blocks the transcriptional activity of E2A-PBX1. Tethers estrogen receptor-alpha (ESR1) to microtubules and allows them to influence estrogen receptors-alpha signaling. In Rattus norvegicus (Rat), this protein is Pre-B-cell leukemia transcription factor-interacting protein 1 (Pbxip1).